Here is a 304-residue protein sequence, read N- to C-terminus: MKVGVVGTGFVGSTAAFALVLRGSCSELVLVDRDEDRAQAEAEDIAHAAPVSHGTRVWHGGHSELADAQVVILTAGANQKPGESRLDLLEKNADIFRELVPQITRAAPDAVLLVTSNPVDLLTDLATQLAPGQPVIGSGTVLDSARFRHLMAQHAGVDGTHAHGYVLGEHGDSEVLAWSSAMVAGMPVADFMQAQNLPWNEQVRAKIDEGTRNAAASIIEGKRATYYGIGAALARITEAVLRDRRAVLTVSAPTPEYGVSLSLPRVVGRQGVLSTLHPKLTGDEQQKLEQSAGVLRGFKQQLGL.

NAD(+) contacts are provided by residues valine 11, aspartate 32, arginine 37, and 76–77 (GA). Residues glutamine 79, arginine 85, and 117–120 (NPVD) contribute to the substrate site. Serine 138 lines the NAD(+) pocket. 143–146 (DSAR) is a substrate binding site. 2 residues coordinate beta-D-fructose 1,6-bisphosphate: arginine 148 and histidine 163. Residue histidine 170 is the Proton acceptor of the active site. Substrate is bound at residue threonine 225.

The protein belongs to the LDH/MDH superfamily. LDH family. Homotetramer.

The protein localises to the cytoplasm. It catalyses the reaction (S)-lactate + NAD(+) = pyruvate + NADH + H(+). The protein operates within fermentation; pyruvate fermentation to lactate; (S)-lactate from pyruvate: step 1/1. Allosterically activated by fructose 1,6-bisphosphate (FBP). Catalyzes the conversion of lactate to pyruvate. The protein is L-lactate dehydrogenase of Deinococcus radiodurans (strain ATCC 13939 / DSM 20539 / JCM 16871 / CCUG 27074 / LMG 4051 / NBRC 15346 / NCIMB 9279 / VKM B-1422 / R1).